Here is a 185-residue protein sequence, read N- to C-terminus: MIKDVIKKSEEKMNKTINSLNSELATMKAGRANPTMLDRIQVEYYGSMCPLNQVANVSSPEPRLLVITPWEKPMLKEIEKAILKSDLGINPNNDGTIIRLLVPELTEETRKNLVKNVKKVGEQAKVAIRSIRKDANDKVKNFKKEGTITEDEMKKGEDDIQKVTDKFVKEIDTIVAAKEKEIMSI.

Belongs to the RRF family.

The protein localises to the cytoplasm. In terms of biological role, responsible for the release of ribosomes from messenger RNA at the termination of protein biosynthesis. May increase the efficiency of translation by recycling ribosomes from one round of translation to another. The protein is Ribosome-recycling factor of Clostridium perfringens (strain ATCC 13124 / DSM 756 / JCM 1290 / NCIMB 6125 / NCTC 8237 / Type A).